Here is a 228-residue protein sequence, read N- to C-terminus: Phosphoribosylformylglycinamidine synthase subunit PurQ (228 aa).

The 224-residue stretch at 3–226 folds into the Glutamine amidotransferase type-1 domain; sequence FAVIVFPGSN…IANWRDSYAI (224 aa). Catalysis depends on cysteine 87, which acts as the Nucleophile. Catalysis depends on residues histidine 195 and glutamate 197.

In terms of assembly, part of the FGAM synthase complex composed of 1 PurL, 1 PurQ and 2 PurS subunits.

Its subcellular location is the cytoplasm. It carries out the reaction N(2)-formyl-N(1)-(5-phospho-beta-D-ribosyl)glycinamide + L-glutamine + ATP + H2O = 2-formamido-N(1)-(5-O-phospho-beta-D-ribosyl)acetamidine + L-glutamate + ADP + phosphate + H(+). It catalyses the reaction L-glutamine + H2O = L-glutamate + NH4(+). It participates in purine metabolism; IMP biosynthesis via de novo pathway; 5-amino-1-(5-phospho-D-ribosyl)imidazole from N(2)-formyl-N(1)-(5-phospho-D-ribosyl)glycinamide: step 1/2. Its function is as follows. Part of the phosphoribosylformylglycinamidine synthase complex involved in the purines biosynthetic pathway. Catalyzes the ATP-dependent conversion of formylglycinamide ribonucleotide (FGAR) and glutamine to yield formylglycinamidine ribonucleotide (FGAM) and glutamate. The FGAM synthase complex is composed of three subunits. PurQ produces an ammonia molecule by converting glutamine to glutamate. PurL transfers the ammonia molecule to FGAR to form FGAM in an ATP-dependent manner. PurS interacts with PurQ and PurL and is thought to assist in the transfer of the ammonia molecule from PurQ to PurL. This is Phosphoribosylformylglycinamidine synthase subunit PurQ from Oceanobacillus iheyensis (strain DSM 14371 / CIP 107618 / JCM 11309 / KCTC 3954 / HTE831).